The primary structure comprises 88 residues: U18-hexatoxin-Hi1a (88 aa).

The first 17 residues, 1–17 (MRIYSLLILSFLLLASA), serve as a signal peptide directing secretion. The propeptide occupies 18–47 (VLINSAEMPRSEKSLLYSIMQGREDSEEGR). 4 disulfide bridges follow: Cys-48-Cys-63, Cys-55-Cys-69, Cys-62-Cys-81, and Cys-71-Cys-79.

This sequence belongs to the neurotoxin 07 (Beta/delta-agtx) family. 02 (aga-3) subfamily. Expressed by the venom gland.

The protein resides in the secreted. In terms of biological role, weak insecticidal toxin with probable ion channel impairing activity. In vivo, induces paralysis when injected into sheep blowflies (L.cuprina). Shows weak toxicity, since it is only toxic at high doses, and flies recover within 24 hours. The chain is U18-hexatoxin-Hi1a from Hadronyche infensa (Fraser island funnel-web spider).